A 607-amino-acid polypeptide reads, in one-letter code: Guanine nucleotide-binding protein-like 1 (607 aa).

Residues 1–14 (MPRKKPFSVKQKKK) are compositionally biased toward basic residues. A disordered region spans residues 1 to 81 (MPRKKPFSVK…GPRGYDPNRY (81 aa)). A compositionally biased stretch (basic and acidic residues) spans 15-26 (QLQDKRERKRGL). Phosphoserine is present on residues Ser-32, Ser-33, and Ser-34. Phosphothreonine is present on residues Thr-48 and Thr-50. Phosphoserine occurs at positions 51 and 68. The CP-type G domain maps to 178–418 (WRQLWRVLEM…LCDCPGLIFP (241 aa)). 225–228 (NKVD) lines the GTP pocket. Ser-324 carries the phosphoserine modification. GTP contacts are provided by residues 367–374 (GFPNVGKS) and 411–415 (DCPGL). The tract at residues 544 to 607 (GRVGPAGDEE…PYALLGEDEC (64 aa)) is disordered. Over residues 550–585 (GDEEEEEEEELSSSCEEEGEEDRDADEEGEGDEDTP) the composition is skewed to acidic residues. Ser-561, Ser-562, and Ser-563 each carry phosphoserine.

It belongs to the TRAFAC class YlqF/YawG GTPase family.

Possible regulatory or functional link with the histocompatibility cluster. This chain is Guanine nucleotide-binding protein-like 1 (Gnl1), found in Mus musculus (Mouse).